The chain runs to 490 residues: Aspartyl/glutamyl-tRNA(Asn/Gln) amidotransferase subunit B (490 aa).

The protein belongs to the GatB/GatE family. GatB subfamily. As to quaternary structure, heterotrimer of A, B and C subunits.

The catalysed reaction is L-glutamyl-tRNA(Gln) + L-glutamine + ATP + H2O = L-glutaminyl-tRNA(Gln) + L-glutamate + ADP + phosphate + H(+). The enzyme catalyses L-aspartyl-tRNA(Asn) + L-glutamine + ATP + H2O = L-asparaginyl-tRNA(Asn) + L-glutamate + ADP + phosphate + 2 H(+). Its function is as follows. Allows the formation of correctly charged Asn-tRNA(Asn) or Gln-tRNA(Gln) through the transamidation of misacylated Asp-tRNA(Asn) or Glu-tRNA(Gln) in organisms which lack either or both of asparaginyl-tRNA or glutaminyl-tRNA synthetases. The reaction takes place in the presence of glutamine and ATP through an activated phospho-Asp-tRNA(Asn) or phospho-Glu-tRNA(Gln). The polypeptide is Aspartyl/glutamyl-tRNA(Asn/Gln) amidotransferase subunit B (Zymomonas mobilis subsp. mobilis (strain ATCC 31821 / ZM4 / CP4)).